The primary structure comprises 376 residues: N-acetyldiaminopimelate deacetylase (376 aa).

The active site involves aspartate 69. Residue glutamate 128 is the Proton acceptor of the active site.

This sequence belongs to the peptidase M20A family. N-acetyldiaminopimelate deacetylase subfamily.

The catalysed reaction is N-acetyl-(2S,6S)-2,6-diaminopimelate + H2O = (2S,6S)-2,6-diaminopimelate + acetate. The protein operates within amino-acid biosynthesis; L-lysine biosynthesis via DAP pathway; LL-2,6-diaminopimelate from (S)-tetrahydrodipicolinate (acetylase route): step 3/3. Its function is as follows. Catalyzes the conversion of N-acetyl-diaminopimelate to diaminopimelate and acetate. The chain is N-acetyldiaminopimelate deacetylase from Streptococcus pneumoniae serotype 19F (strain G54).